A 379-amino-acid chain; its full sequence is Leukocyte elastase inhibitor (379 aa).

The residue at position 1 (Met1) is an N-acetylmethionine. N6-acetyllysine is present on residues Lys137 and Lys177. The segment at 351 to 379 (NFNADHPFIFFIRHNPSANILFLGRFSSP) is CARD-binding motif (CBM).

This sequence belongs to the serpin family. Ov-serpin subfamily. In terms of assembly, monomer. Interacts (via C-terminus) with CASP1; CASP4 (via CARD domain) and CASP5; these interactions regulate the activity of inflammatory caspases. Interacts with PRTN3. Interacts with GZMH. Interacts with TMSB4. Post-translationally, the N-terminus is blocked.

The protein resides in the secreted. The protein localises to the cytoplasm. It is found in the cytolytic granule. It localises to the early endosome. Functionally, neutrophil serine protease inhibitor that plays an essential role in the regulation of the innate immune response, inflammation and cellular homeostasis. Acts primarily to protect the cell from proteases released in the cytoplasm during stress or infection. These proteases are important in killing microbes but when released from granules, these potent enzymes also destroy host proteins and contribute to mortality. Regulates the activity of the neutrophil proteases elastase, cathepsin G, proteinase-3, chymase, chymotrypsin, and kallikrein-3. Also acts as a potent intracellular inhibitor of GZMH by directly blocking its proteolytic activity. During inflammation, limits the activity of inflammatory caspases CASP1, CASP4 and CASP5 by suppressing their caspase-recruitment domain (CARD) oligomerization and enzymatic activation. When secreted, promotes the proliferation of beta-cells via its protease inhibitory function. The polypeptide is Leukocyte elastase inhibitor (SERPINB1) (Equus caballus (Horse)).